We begin with the raw amino-acid sequence, 969 residues long: GATOR2 complex protein Wdr59 (969 aa).

The interval 1–24 (MPPTETLRPGERGTAGGPGAGAPE) is disordered. WD repeat units follow at residues 127 to 167 (GHTR…KPAL), 172 to 211 (VCMSGATQVGFNRVSGNLLAAAHDGDLRIWDIRKGSCPTH), 215 to 255 (AHLN…RAEK), 258 to 303 (TTMS…DPIC), and 307 to 351 (GHTD…LKLC). T373 bears the Phosphothreonine mark. The RWD domain occupies 435–538 (HEFSLLNTNM…RALVAAMKKK (104 aa)). The segment at 891–911 (ECRKCAKPKRTPKCEPCKRPV) adopts a C4-type zinc-finger fold. C892, C895, C904, C907, C917, C928, H933, H936, H939, C950, C953, C955, and C957 together coordinate Zn(2+). Residues 912 to 960 (LFCVLCRLPVKGAANACLACGHGGHIDHMMQWFEKHNVCATCGCKCLER) form an RING-type; atypical zinc finger.

This sequence belongs to the WD repeat WDR59 family. In terms of assembly, component of the GATOR complex consisting of mio, Nup44A/Seh1, Im11, Nplr3, Nplr2, Wdr24, Wdr59 and Sec13. Within the GATOR complex, probable component of the GATOR2 subcomplex which is likely composed of mio, Nup44A/Seh1, Wdr24, Wdr59 and Sec13. The GATOR2 complex associates with unmet in the absence of S-adenosyl-L-methionine; the mio-Wdr24-Nup44A subcomplex is essential and sufficient for this interaction while Wdr59 and Sec13 are dispensable. This association acts as a nutrient sensor to inhibit mTORC1 signaling in the absence of methionine.

The protein localises to the lysosome membrane. Its function is as follows. A component of the GATOR complex, which functions as a regulator of the amino acid-sensing branch of the mTORC1 signaling pathway. The two GATOR subcomplexes, GATOR1 and GATOR2, regulate the mTORC1 pathway in order to mediate metabolic homeostasis, female gametogenesis and the response to amino acid limitation and complete starvation. GATOR2 activates the mTORC1 signaling pathway through the inhibition of the GATOR1 subcomplex, controlling the switch to cell proliferation and growth under nutrient replete conditions and during female oocyte development. Acts as an atypical component of the GATOR2 subcomplex, which can either promote or inhibit mTORC1 signaling, depending on tissues: inhibits mTORC1 activity by preventing the activity of GATOR2 in the ovary and the eye imaginal disk brain, while it promotes mTORC1 activity in the fat body. This chain is GATOR2 complex protein Wdr59, found in Drosophila melanogaster (Fruit fly).